Reading from the N-terminus, the 463-residue chain is Putative sodium-coupled neutral amino acid transporter 11 (463 aa).

The segment at 1–27 is disordered; sequence MGYPGQRPVIPPQSHRDDRETLVSEHK. A compositionally biased stretch (basic and acidic residues) spans 14–25; the sequence is SHRDDRETLVSE. 11 helical membrane passes run 38–58, 65–85, 105–125, 150–170, 178–198, 225–245, 256–276, 298–320, 336–356, 358–378, and 397–417; these read AVFN…PYSM, LGIL…ILLI, GFPG…IAMI, LLIG…LPLS, LGKI…IVVA, VGVM…YGSL, IIHV…TCGY, VTFG…CFVT, VCHI…SLLI, CLGI…IFII, and IMSC…FVMA. N-linked (GlcNAc...) asparagine glycosylation is found at Asn-437, Asn-442, and Asn-458.

Belongs to the amino acid/polyamine transporter 2 family.

It is found in the membrane. Its function is as follows. Putative sodium-dependent amino acid/proton antiporter. This is Putative sodium-coupled neutral amino acid transporter 11 (SLC38A11) from Bos taurus (Bovine).